The chain runs to 455 residues: ATP-dependent protease ATPase subunit HslU (455 aa).

ATP is bound by residues valine 23, 65-70 (GVGKTE), aspartate 266, glutamate 333, and arginine 405.

Belongs to the ClpX chaperone family. HslU subfamily. As to quaternary structure, a double ring-shaped homohexamer of HslV is capped on each side by a ring-shaped HslU homohexamer. The assembly of the HslU/HslV complex is dependent on binding of ATP.

The protein localises to the cytoplasm. Its function is as follows. ATPase subunit of a proteasome-like degradation complex; this subunit has chaperone activity. The binding of ATP and its subsequent hydrolysis by HslU are essential for unfolding of protein substrates subsequently hydrolyzed by HslV. HslU recognizes the N-terminal part of its protein substrates and unfolds these before they are guided to HslV for hydrolysis. The polypeptide is ATP-dependent protease ATPase subunit HslU (Xanthomonas euvesicatoria pv. vesicatoria (strain 85-10) (Xanthomonas campestris pv. vesicatoria)).